The following is a 676-amino-acid chain: Mediator of RNA polymerase II transcription subunit 17 (676 aa).

2 disordered regions span residues 27-68 (IGSK…QFSN) and 117-176 (IEND…TQDT). Positions 29–40 (SKSTSPHSNSTS) are enriched in low complexity. 2 stretches are compositionally biased toward basic and acidic residues: residues 47 to 56 (HNTENEEVDN) and 120 to 134 (DNGK…KAED). The span at 135–145 (GIDTMDIDQND) shows a compositional bias: acidic residues. The segment covering 146-160 (NSEANTNDIGYNEWS) has biased composition (polar residues).

The protein belongs to the Mediator complex subunit 17 family. As to quaternary structure, component of the Mediator complex.

The protein localises to the nucleus. In terms of biological role, component of the Mediator complex, a coactivator involved in the regulated transcription of nearly all RNA polymerase II-dependent genes. Mediator functions as a bridge to convey information from gene-specific regulatory proteins to the basal RNA polymerase II transcription machinery. Mediator is recruited to promoters by direct interactions with regulatory proteins and serves as a scaffold for the assembly of a functional preinitiation complex with RNA polymerase II and the general transcription factors. This is Mediator of RNA polymerase II transcription subunit 17 (SRB4) from Candida glabrata (strain ATCC 2001 / BCRC 20586 / JCM 3761 / NBRC 0622 / NRRL Y-65 / CBS 138) (Yeast).